The chain runs to 405 residues: Exodeoxyribonuclease 7 large subunit (405 aa).

The protein belongs to the XseA family. As to quaternary structure, heterooligomer composed of large and small subunits.

The protein resides in the cytoplasm. It catalyses the reaction Exonucleolytic cleavage in either 5'- to 3'- or 3'- to 5'-direction to yield nucleoside 5'-phosphates.. In terms of biological role, bidirectionally degrades single-stranded DNA into large acid-insoluble oligonucleotides, which are then degraded further into small acid-soluble oligonucleotides. The sequence is that of Exodeoxyribonuclease 7 large subunit from Halothermothrix orenii (strain H 168 / OCM 544 / DSM 9562).